Reading from the N-terminus, the 66-residue chain is MKAGIHPEFKKATVKCACGNEFETGSVKEEVRVEICSECHPFYTGRQKFASADGRVDRFNKKYGLK.

C16, C18, C36, and C39 together coordinate Zn(2+).

Belongs to the bacterial ribosomal protein bL31 family. Type A subfamily. Part of the 50S ribosomal subunit. It depends on Zn(2+) as a cofactor.

Its function is as follows. Binds the 23S rRNA. The chain is Large ribosomal subunit protein bL31 from Bacillus licheniformis (strain ATCC 14580 / DSM 13 / JCM 2505 / CCUG 7422 / NBRC 12200 / NCIMB 9375 / NCTC 10341 / NRRL NRS-1264 / Gibson 46).